The following is a 226-amino-acid chain: MNIILKISGKFFDEDNVNNLIVLRESIRELTYNGFRVGIVTGGGSTARRYIKLAREIGIGEAYLDLLGIWASRLNAYLVMFSLQDLAYMHVPQSLEEFIQDWSHGKVVVTGGFQPGQSTAAVAALVAEASSSKTLVVATNVDGVYEKDPRVYTDVKLIPHLTTQDLRKILEGSQSVQAGTYELLDPLAIKIVERSKIRVVVMNYRKLNRIINILKGEEVSSIIEPT.

Residue 6-10 (KISGK) coordinates ATP. UMP is bound at residue Gly-43. ATP contacts are provided by Gly-44 and Arg-48. Residues Asp-65 and 113-119 (FQPGQST) each bind UMP. ATP is bound by residues Thr-139, Asn-140, Tyr-145, and Asp-148.

The protein belongs to the UMP kinase family. Homohexamer.

It localises to the cytoplasm. It catalyses the reaction UMP + ATP = UDP + ADP. The protein operates within pyrimidine metabolism; CTP biosynthesis via de novo pathway; UDP from UMP (UMPK route): step 1/1. Inhibited by UTP. Functionally, catalyzes the reversible phosphorylation of UMP to UDP. In Saccharolobus islandicus (strain M.16.27) (Sulfolobus islandicus), this protein is Uridylate kinase.